The sequence spans 1009 residues: Protein-tyrosine kinase 2-beta (1009 aa).

The FERM domain maps to 39 to 359; that stretch reads RILKVCFYSN…GYCRLQGEHQ (321 aa). Phosphoserine occurs at positions 361, 375, and 399. The residue at position 402 (tyrosine 402) is a Phosphotyrosine; by autocatalysis. Positions 425 to 683 constitute a Protein kinase domain; that stretch reads VVLNRILGEG…ELVCSLSDVY (259 aa). Residues 431-439, lysine 457, and 503-509 contribute to the ATP site; these read LGEGFFGEV and ELYPYGE. The active-site Proton acceptor is aspartate 549. Tyrosine 579 carries the post-translational modification Phosphotyrosine. Tyrosine 580 bears the Phosphotyrosine; by SRC, FYN and LCK mark. Residues 701 to 725 form a disordered region; sequence TPKILEPTAFQEPPPKPSRPKYRPP. Residues 712–725 show a composition bias toward pro residues; the sequence is EPPPKPSRPKYRPP. Position 722 is a phosphotyrosine (tyrosine 722). Position 762 is a phosphoserine (serine 762). At threonine 765 the chain carries Phosphothreonine. The interaction with TGFB1I1 stretch occupies residues 801–1009; it reads KVKMRQILDK…LANLAHPPAE (209 aa). Phosphotyrosine is present on residues tyrosine 819 and tyrosine 834. Phosphoserine is present on serine 839. Threonine 842 carries the phosphothreonine modification. Tyrosine 849 bears the Phosphotyrosine mark. Residue serine 866 is modified to Phosphoserine. The focal adhesion targeting (FAT) stretch occupies residues 868 to 1009; it reads QPTANLDRTD…LANLAHPPAE (142 aa). Tyrosine 881 is modified (phosphotyrosine; by SRC).

It belongs to the protein kinase superfamily. Tyr protein kinase family. FAK subfamily. Homodimer, or homooligomer. Interacts with SIRPA and SH2D3C. Interacts with ARHGAP10. Interacts with DLG4. Interacts with KCNA2. Interacts with NPHP1, ASAP1, ASAP2, ARHGAP26, SKAP2 and TGFB1I1. The Tyr-402 phosphorylated form interacts with SRC (via SH2 domain) and SRC family members. Forms a signaling complex with EPHA1, LCK and phosphatidylinositol 3-kinase; upon activation by EFNA1. Interacts with GRB2 (via SH2 domain). Interacts with P53/TP53 and MDM2. Interacts with MYLK. Interacts with BCAR1. Interacts with PDPK1. Interacts (hypophosphorylated) with PXN. Interacts with RB1CC1. Interacts with RHOU. Interacts with VAV1. Interacts with LPXN and PTPN12. Post-translationally, phosphorylated on tyrosine residues in response to various stimuli that elevate the intracellular calcium concentration; this activation is indirect and may be mediated by production of reactive oxygen species (ROS). Tyr-402 is the major autophosphorylation site, but other kinases can also phosphorylate Tyr-402. Autophosphorylation occurs in trans, i.e. one subunit of the dimeric receptor phosphorylates tyrosine residues on the other subunit. Phosphorylation at Tyr-402 promotes interaction with SRC and SRC family members, leading to phosphorylation at Tyr-579; Tyr-580 and Tyr-881. Phosphorylation at Tyr-881 is important for interaction with GRB2. Phosphorylated on tyrosine residues upon activation of FGR and PKC. Recruitment by NPHP1 to cell matrix adhesions initiates Tyr-402 phosphorylation. In monocytes, adherence to substrata is required for tyrosine phosphorylation and kinase activation. Angiotensin II, thapsigargin and L-alpha-lysophosphatidic acid (LPA) also induce autophosphorylation and increase kinase activity. Phosphorylation by MYLK promotes ITGB2 activation and is thus essential to trigger neutrophil transmigration during lung injury. Dephosphorylated by PTPN12. As to expression, most abundant in the brain, with highest levels in amygdala and hippocampus. Low levels in kidney (at protein level). Also expressed in spleen and lymphocytes.

Its subcellular location is the cytoplasm. It localises to the perinuclear region. It is found in the cell membrane. The protein resides in the cell junction. The protein localises to the focal adhesion. Its subcellular location is the cell projection. It localises to the lamellipodium. It is found in the cell cortex. The protein resides in the nucleus. It carries out the reaction L-tyrosyl-[protein] + ATP = O-phospho-L-tyrosyl-[protein] + ADP + H(+). Its activity is regulated as follows. Activated in response to stimuli that lead to increased intracellular Ca(2+) levels; this activation is indirect and may be mediated by calcium-mediated production of reactive oxygen species (ROS). Activated by autophosphorylation at Tyr-402; this creates a binding site for SRC family kinases and leads to phosphorylation at additional tyrosine residues. Phosphorylation at Tyr-402, Tyr-579 and Tyr-580 is required for optimal kinase activity. Inhibited by PF-562,271, BIRB796, PF-4618433 and by PF-431396, PF-2318841 and their derivatives. Inhibited by sulfoximine-substituted trifluoromethylpyrimidines. Inhibited by 4-amino and 5-aryl substituted pyridinone compounds. In terms of biological role, non-receptor protein-tyrosine kinase that regulates reorganization of the actin cytoskeleton, cell polarization, cell migration, adhesion, spreading and bone remodeling. Plays a role in the regulation of the humoral immune response, and is required for normal levels of marginal B-cells in the spleen and normal migration of splenic B-cells. Required for normal macrophage polarization and migration towards sites of inflammation. Regulates cytoskeleton rearrangement and cell spreading in T-cells, and contributes to the regulation of T-cell responses. Promotes osteoclastic bone resorption; this requires both PTK2B/PYK2 and SRC. May inhibit differentiation and activity of osteoprogenitor cells. Functions in signaling downstream of integrin and collagen receptors, immune receptors, G-protein coupled receptors (GPCR), cytokine, chemokine and growth factor receptors, and mediates responses to cellular stress. Forms multisubunit signaling complexes with SRC and SRC family members upon activation; this leads to the phosphorylation of additional tyrosine residues, creating binding sites for scaffold proteins, effectors and substrates. Regulates numerous signaling pathways. Promotes activation of phosphatidylinositol 3-kinase and of the AKT1 signaling cascade. Promotes activation of NOS3. Regulates production of the cellular messenger cGMP. Promotes activation of the MAP kinase signaling cascade, including activation of MAPK1/ERK2, MAPK3/ERK1 and MAPK8/JNK1. Promotes activation of Rho family GTPases, such as RHOA and RAC1. Recruits the ubiquitin ligase MDM2 to P53/TP53 in the nucleus, and thereby regulates P53/TP53 activity, P53/TP53 ubiquitination and proteasomal degradation. Acts as a scaffold, binding to both PDPK1 and SRC, thereby allowing SRC to phosphorylate PDPK1 at 'Tyr-9, 'Tyr-373', and 'Tyr-376'. Promotes phosphorylation of NMDA receptors by SRC family members, and thereby contributes to the regulation of NMDA receptor ion channel activity and intracellular Ca(2+) levels. May also regulate potassium ion transport by phosphorylation of potassium channel subunits. Phosphorylates SRC; this increases SRC kinase activity. Phosphorylates ASAP1, NPHP1, KCNA2 and SHC1. Promotes phosphorylation of ASAP2, RHOU and PXN; this requires both SRC and PTK2/PYK2. The polypeptide is Protein-tyrosine kinase 2-beta (PTK2B) (Homo sapiens (Human)).